We begin with the raw amino-acid sequence, 348 residues long: Anthranilate phosphoribosyltransferase (348 aa).

Residues G81, 84 to 85 (GD), T89, 91 to 94 (NIST), 109 to 117 (KHGNRSSSG), and S121 contribute to the 5-phospho-alpha-D-ribose 1-diphosphate site. An anthranilate-binding site is contributed by G81. Residue S93 coordinates Mg(2+). N112 lines the anthranilate pocket. R167 provides a ligand contact to anthranilate. Mg(2+) is bound by residues D226 and E227.

This sequence belongs to the anthranilate phosphoribosyltransferase family. In terms of assembly, homodimer. Mg(2+) serves as cofactor.

It carries out the reaction N-(5-phospho-beta-D-ribosyl)anthranilate + diphosphate = 5-phospho-alpha-D-ribose 1-diphosphate + anthranilate. The protein operates within amino-acid biosynthesis; L-tryptophan biosynthesis; L-tryptophan from chorismate: step 2/5. In terms of biological role, catalyzes the transfer of the phosphoribosyl group of 5-phosphorylribose-1-pyrophosphate (PRPP) to anthranilate to yield N-(5'-phosphoribosyl)-anthranilate (PRA). The chain is Anthranilate phosphoribosyltransferase from Nitrosopumilus maritimus (strain SCM1).